The sequence spans 267 residues: 4-hydroxy-tetrahydrodipicolinate reductase (267 aa).

NAD(+)-binding positions include 8-13 (GAAGRM) and Asp-34. NADP(+) is bound at residue Arg-35. Residues 98–100 (GTT) and 122–125 (AANF) contribute to the NAD(+) site. His-155 functions as the Proton donor/acceptor in the catalytic mechanism. Position 156 (His-156) interacts with (S)-2,3,4,5-tetrahydrodipicolinate. Catalysis depends on Lys-159, which acts as the Proton donor. 165 to 166 (GT) provides a ligand contact to (S)-2,3,4,5-tetrahydrodipicolinate.

Belongs to the DapB family.

The protein localises to the cytoplasm. It catalyses the reaction (S)-2,3,4,5-tetrahydrodipicolinate + NAD(+) + H2O = (2S,4S)-4-hydroxy-2,3,4,5-tetrahydrodipicolinate + NADH + H(+). The catalysed reaction is (S)-2,3,4,5-tetrahydrodipicolinate + NADP(+) + H2O = (2S,4S)-4-hydroxy-2,3,4,5-tetrahydrodipicolinate + NADPH + H(+). The protein operates within amino-acid biosynthesis; L-lysine biosynthesis via DAP pathway; (S)-tetrahydrodipicolinate from L-aspartate: step 4/4. Functionally, catalyzes the conversion of 4-hydroxy-tetrahydrodipicolinate (HTPA) to tetrahydrodipicolinate. This chain is 4-hydroxy-tetrahydrodipicolinate reductase, found in Pseudomonas savastanoi pv. phaseolicola (strain 1448A / Race 6) (Pseudomonas syringae pv. phaseolicola (strain 1448A / Race 6)).